The following is a 397-amino-acid chain: S-adenosylmethionine synthase (397 aa).

Histidine 17 is a binding site for ATP. Aspartate 19 provides a ligand contact to Mg(2+). Glutamate 45 is a binding site for K(+). Residues glutamate 58 and glutamine 101 each contribute to the L-methionine site. The tract at residues 101–111 is flexible loop; the sequence is QSPDIAQGVDK. ATP is bound by residues 176-178, 243-244, aspartate 252, 258-259, and lysine 279; these read DGK, RF, and RK. An L-methionine-binding site is contributed by aspartate 252. An L-methionine-binding site is contributed by lysine 283.

It belongs to the AdoMet synthase family. Homotetramer; dimer of dimers. Requires Mg(2+) as cofactor. K(+) is required as a cofactor.

The protein resides in the cytoplasm. The catalysed reaction is L-methionine + ATP + H2O = S-adenosyl-L-methionine + phosphate + diphosphate. Its pathway is amino-acid biosynthesis; S-adenosyl-L-methionine biosynthesis; S-adenosyl-L-methionine from L-methionine: step 1/1. In terms of biological role, catalyzes the formation of S-adenosylmethionine (AdoMet) from methionine and ATP. The overall synthetic reaction is composed of two sequential steps, AdoMet formation and the subsequent tripolyphosphate hydrolysis which occurs prior to release of AdoMet from the enzyme. The protein is S-adenosylmethionine synthase of Staphylococcus aureus (strain USA300).